A 241-amino-acid chain; its full sequence is NAD-dependent protein deacetylase 2 (241 aa).

Residues 1–241 (MTGKPLVAIL…ALPALLRGLG (241 aa)) enclose the Deacetylase sirtuin-type domain. Residues Ala13, Thr17, Arg25, Gln92, Val94, Asp95, and His112 each contribute to the NAD(+) site. Nicotinamide contacts are provided by Val94 and Asp95. His112 serves as the catalytic Proton acceptor. Cys120, Cys123, Cys145, and Cys148 together coordinate Zn(2+). Residues Thr186, Ser187, Asn211, and Ile229 each coordinate NAD(+).

It belongs to the sirtuin family. Class U subfamily. Requires Zn(2+) as cofactor.

The protein localises to the cytoplasm. It catalyses the reaction N(6)-acetyl-L-lysyl-[protein] + NAD(+) + H2O = 2''-O-acetyl-ADP-D-ribose + nicotinamide + L-lysyl-[protein]. Functionally, NAD-dependent protein deacetylase which modulates the activities of several enzymes which are inactive in their acetylated form. This Streptomyces coelicolor (strain ATCC BAA-471 / A3(2) / M145) protein is NAD-dependent protein deacetylase 2.